We begin with the raw amino-acid sequence, 402 residues long: Tyrosine--tRNA ligase (402 aa).

A 'HIGH' region motif is present at residues 47–56 (PTAPDLHLGH). The 'KMSKS' region motif lies at 232 to 236 (KMSKS). ATP is bound at residue Lys-235. Residues 341–401 (VGVLDVLKQI…GKKRFMKLNI (61 aa)) form the S4 RNA-binding domain.

Belongs to the class-I aminoacyl-tRNA synthetase family. TyrS type 2 subfamily. In terms of assembly, homodimer.

The protein resides in the cytoplasm. The catalysed reaction is tRNA(Tyr) + L-tyrosine + ATP = L-tyrosyl-tRNA(Tyr) + AMP + diphosphate + H(+). Its function is as follows. Catalyzes the attachment of tyrosine to tRNA(Tyr) in a two-step reaction: tyrosine is first activated by ATP to form Tyr-AMP and then transferred to the acceptor end of tRNA(Tyr). The chain is Tyrosine--tRNA ligase from Helicobacter pylori (strain J99 / ATCC 700824) (Campylobacter pylori J99).